The chain runs to 306 residues: Ornithine carbamoyltransferase (306 aa).

Carbamoyl phosphate is bound by residues 54 to 57, Gln-81, Arg-105, and 132 to 135; these read STRT and HPLQ. L-ornithine is bound by residues Asn-162, Asp-226, and 230 to 231; that span reads SM. Carbamoyl phosphate is bound by residues 266-267 and Arg-294; that span reads CL.

The protein belongs to the aspartate/ornithine carbamoyltransferase superfamily. OTCase family.

It is found in the cytoplasm. It carries out the reaction carbamoyl phosphate + L-ornithine = L-citrulline + phosphate + H(+). The protein operates within amino-acid biosynthesis; L-arginine biosynthesis; L-arginine from L-ornithine and carbamoyl phosphate: step 1/3. Its function is as follows. Reversibly catalyzes the transfer of the carbamoyl group from carbamoyl phosphate (CP) to the N(epsilon) atom of ornithine (ORN) to produce L-citrulline. In Sulfurisphaera tokodaii (strain DSM 16993 / JCM 10545 / NBRC 100140 / 7) (Sulfolobus tokodaii), this protein is Ornithine carbamoyltransferase.